Here is a 343-residue protein sequence, read N- to C-terminus: Protein RecA (343 aa).

66–73 (GPESSGKT) is an ATP binding site.

The protein belongs to the RecA family.

Its subcellular location is the cytoplasm. Functionally, can catalyze the hydrolysis of ATP in the presence of single-stranded DNA, the ATP-dependent uptake of single-stranded DNA by duplex DNA, and the ATP-dependent hybridization of homologous single-stranded DNAs. It interacts with LexA causing its activation and leading to its autocatalytic cleavage. This chain is Protein RecA, found in Dechloromonas aromatica (strain RCB).